The following is a 398-amino-acid chain: Acetate kinase (398 aa).

Mg(2+) is bound at residue Asn-10. Lys-17 contributes to the ATP binding site. Arg-89 contacts substrate. Asp-148 (proton donor/acceptor) is an active-site residue. ATP contacts are provided by residues His-208–Gly-212, Asp-283–Arg-285, and Gly-331–Asn-335. Glu-385 provides a ligand contact to Mg(2+).

It belongs to the acetokinase family. In terms of assembly, homodimer. Requires Mg(2+) as cofactor. It depends on Mn(2+) as a cofactor.

The protein resides in the cytoplasm. It carries out the reaction acetate + ATP = acetyl phosphate + ADP. It participates in metabolic intermediate biosynthesis; acetyl-CoA biosynthesis; acetyl-CoA from acetate: step 1/2. Functionally, catalyzes the formation of acetyl phosphate from acetate and ATP. Can also catalyze the reverse reaction. The protein is Acetate kinase of Histophilus somni (strain 129Pt) (Haemophilus somnus).